A 357-amino-acid chain; its full sequence is Queuosine-tRNA galactosyltransferase (357 aa).

It belongs to the glycosyltransferase 2 family.

It is found in the cytoplasm. The enzyme catalyses queuosine(34) in tRNA(Tyr) + UDP-alpha-D-galactose = O-5''-beta-D-galactosylqueuosine(34) in tRNA(Tyr) + UDP + H(+). Functionally, glycosyltransferase that specifically catalyzes galactosylation of cytoplasmic tRNA(Tyr) modified with queuosine at position 34 (queuosine(34)). Galactosylates the cyclopentene hydroxyl group of queuosine(34) in tRNA(Tyr) to form galactosyl-queuosine(34). Mannosylation of queuosine(34) in tRNA(Tyr) is required to slow-down elongation at cognate codons UAC and suppress stop codon readthrough, thereby regulating protein translation. The chain is Queuosine-tRNA galactosyltransferase from Rattus norvegicus (Rat).